The primary structure comprises 273 residues: Putative carboxymethylenebutenolidase (273 aa).

Residues C130, D191, and H223 contribute to the active site.

Belongs to the dienelactone hydrolase family.

It catalyses the reaction 2-(5-oxo-2,5-dihydrofuran-2-ylidene)acetate + H2O = 4-oxohex-2-enedioate + H(+). This Saccharomyces cerevisiae (strain ATCC 204508 / S288c) (Baker's yeast) protein is Putative carboxymethylenebutenolidase.